The primary structure comprises 698 residues: MSQEKKVFKTEWAGRSLTIETGQLAKQANGAVLVRYGDTVVLSTATASKEPRDGDFFPLTVNYEEKMYAAGKIPGGFKKREGRPGDDATLTARLIDRPIRPLFPKGYKHDVQIMNMVLSADPDCSPQMAAMIGSSMALSVSDIPFQGPIAGVNVGYIDGKYIINPTVEEKEVSRLDLEVAGHKDAVNMVEAGASEITEQEMLEAIFFGHEEIQRLVDFQQQIVDHIQPVKQEFIPAERDEALVERVKSLTEEKGLKETVLTFDKQQRDENLDNLKEEIVNEFIDEEDPENELLIKEVYAILNELVKEEVRRLIADEKIRPDGRKPDEIRPLDSEVGILPRTHGSGLFTRGQTQALSVLTLGALGDYQLIDGLGPEEEKRFMHHYNFPNFSVGETGPVRAPGRREIGHGALGERALKYIIPDTADFPYTIRIVSEVLESNGSSSQASICGSTLALMDAGVPIKAPVAGIAMGLVTREDSYTILTDIQGMEDALGDMDFKVAGTKEGITAIQMDIKIDGLTREIIEEALEQARRGRLEIMNHMLQTIDQPRTELSAYAPKVVTMTIKPDKIRDVIGPGGKKINEIIDETGVKLDIEQDGTIFIGAVDQAMINRAREIIEEITREAEVGQTYQATVKRIEKYGAFVGLFPGKDALLHISQISKNRIEKVEDVLKIGDTIEVKITEIDKQGRVNASHRALEE.

Mg(2+)-binding residues include Asp-490 and Asp-496. A KH domain is found at 557-616 (PKVVTMTIKPDKIRDVIGPGGKKINEIIDETGVKLDIEQDGTIFIGAVDQAMINRAREII). Residues 626 to 694 (GQTYQATVKR…KQGRVNASHR (69 aa)) form the S1 motif domain.

The protein belongs to the polyribonucleotide nucleotidyltransferase family. The cofactor is Mg(2+).

The protein localises to the cytoplasm. The catalysed reaction is RNA(n+1) + phosphate = RNA(n) + a ribonucleoside 5'-diphosphate. Involved in mRNA degradation. Catalyzes the phosphorolysis of single-stranded polyribonucleotides processively in the 3'- to 5'-direction. The chain is Polyribonucleotide nucleotidyltransferase from Staphylococcus aureus (strain Mu3 / ATCC 700698).